A 302-amino-acid polypeptide reads, in one-letter code: Methionyl-tRNA formyltransferase (302 aa).

(6S)-5,6,7,8-tetrahydrofolate is bound at residue 103 to 106 (SLLP).

This sequence belongs to the Fmt family.

It carries out the reaction L-methionyl-tRNA(fMet) + (6R)-10-formyltetrahydrofolate = N-formyl-L-methionyl-tRNA(fMet) + (6S)-5,6,7,8-tetrahydrofolate + H(+). Attaches a formyl group to the free amino group of methionyl-tRNA(fMet). The formyl group appears to play a dual role in the initiator identity of N-formylmethionyl-tRNA by promoting its recognition by IF2 and preventing the misappropriation of this tRNA by the elongation apparatus. The sequence is that of Methionyl-tRNA formyltransferase from Pseudothermotoga lettingae (strain ATCC BAA-301 / DSM 14385 / NBRC 107922 / TMO) (Thermotoga lettingae).